Reading from the N-terminus, the 287-residue chain is ATP synthase gamma chain (287 aa).

The protein belongs to the ATPase gamma chain family. As to quaternary structure, F-type ATPases have 2 components, CF(1) - the catalytic core - and CF(0) - the membrane proton channel. CF(1) has five subunits: alpha(3), beta(3), gamma(1), delta(1), epsilon(1). CF(0) has three main subunits: a, b and c.

Its subcellular location is the cell inner membrane. Its function is as follows. Produces ATP from ADP in the presence of a proton gradient across the membrane. The gamma chain is believed to be important in regulating ATPase activity and the flow of protons through the CF(0) complex. This Methylococcus capsulatus (strain ATCC 33009 / NCIMB 11132 / Bath) protein is ATP synthase gamma chain.